Reading from the N-terminus, the 897-residue chain is Zinc finger protein zas1 (897 aa).

2 C2H2-type zinc fingers span residues 26–50 (FYCT…ERTH) and 56–79 (FSCS…QQMH). Residues 93 to 119 (ASCFLGFCVLAHDYVNLINARHFMIEH) form a C2H2-type 3; atypical zinc finger.

Its subcellular location is the nucleus. The sequence is that of Zinc finger protein zas1 (zas1) from Schizosaccharomyces pombe (strain 972 / ATCC 24843) (Fission yeast).